Here is a 269-residue protein sequence, read N- to C-terminus: uncharacterized protein (269 aa).

One can recognise an ACT domain in the interval 14-89 (FEYEIQVNRP…KLREPRLRDR (76 aa)).

This is an uncharacterized protein from Bacillus subtilis (strain 168).